Here is a 202-residue protein sequence, read N- to C-terminus: Rho GDP-dissociation inhibitor (202 aa).

Ala2 carries the post-translational modification N-acetylalanine. Thr27 carries the post-translational modification Phosphothreonine. Residue Ser40 is modified to Phosphoserine.

Belongs to the Rho GDI family.

Its subcellular location is the cytoplasm. Regulates the GDP/GTP exchange reaction of the Rho proteins by inhibiting the dissociation of GDP from them, and the subsequent binding of GTP to them. The sequence is that of Rho GDP-dissociation inhibitor (RDI1) from Saccharomyces cerevisiae (strain ATCC 204508 / S288c) (Baker's yeast).